A 233-amino-acid polypeptide reads, in one-letter code: C-type lectin domain-containing protein 87 (233 aa).

An N-terminal signal peptide occupies residues 1-19 (MRFCLLVAFILPGLFLVHA). O-linked (Xyl...) (chondroitin sulfate) serine glycosylation occurs at Ser31. Asn81 carries an N-linked (GlcNAc...) asparagine glycan. The region spanning 93–223 (FADSCYWIEK…CTYMLYSICE (131 aa)) is the C-type lectin domain. Cystine bridges form between Cys114-Cys222 and Cys193-Cys214. Residue Asn225 is glycosylated (N-linked (GlcNAc...) asparagine).

The protein is C-type lectin domain-containing protein 87 of Caenorhabditis elegans.